Here is a 558-residue protein sequence, read N- to C-terminus: 2-isopropylmalate synthase (558 aa).

One can recognise a Pyruvate carboxyltransferase domain in the interval 31–306 (PIWCAVDLRD…DPGIDFSNID (276 aa)). Mg(2+) contacts are provided by D40, H245, H247, and N281. The segment at 440-558 (AGSPYSFLEH…LCAANHLSDK (119 aa)) is regulatory domain.

The protein belongs to the alpha-IPM synthase/homocitrate synthase family. LeuA type 2 subfamily. As to quaternary structure, homodimer. Mg(2+) serves as cofactor.

It is found in the cytoplasm. It carries out the reaction 3-methyl-2-oxobutanoate + acetyl-CoA + H2O = (2S)-2-isopropylmalate + CoA + H(+). Its pathway is amino-acid biosynthesis; L-leucine biosynthesis; L-leucine from 3-methyl-2-oxobutanoate: step 1/4. Catalyzes the condensation of the acetyl group of acetyl-CoA with 3-methyl-2-oxobutanoate (2-ketoisovalerate) to form 3-carboxy-3-hydroxy-4-methylpentanoate (2-isopropylmalate). The protein is 2-isopropylmalate synthase of Rhodospirillum rubrum (strain ATCC 11170 / ATH 1.1.1 / DSM 467 / LMG 4362 / NCIMB 8255 / S1).